Consider the following 396-residue polypeptide: Phosphoglycerate kinase (396 aa).

Substrate contacts are provided by residues 21-23 (DFN), Arg-36, 59-62 (HLGK), Arg-119, and Arg-156. Residues Lys-206, Gly-294, Glu-325, and 352 to 355 (GGDS) contribute to the ATP site.

It belongs to the phosphoglycerate kinase family. Monomer.

The protein resides in the cytoplasm. It carries out the reaction (2R)-3-phosphoglycerate + ATP = (2R)-3-phospho-glyceroyl phosphate + ADP. It functions in the pathway carbohydrate degradation; glycolysis; pyruvate from D-glyceraldehyde 3-phosphate: step 2/5. The chain is Phosphoglycerate kinase from Listeria welshimeri serovar 6b (strain ATCC 35897 / DSM 20650 / CCUG 15529 / CIP 8149 / NCTC 11857 / SLCC 5334 / V8).